A 91-amino-acid chain; its full sequence is DNA-binding protein HU (91 aa).

Belongs to the bacterial histone-like protein family.

Its function is as follows. Histone-like DNA-binding protein which is capable of wrapping DNA to stabilize it, and thus to prevent its denaturation under extreme environmental conditions. Also seems to act as a fortuitous virulence factor in delayed sequelae by binding to heparan sulfate-proteoglycans in the extracellular matrix of target organs and acting as a nidus for in situ immune complex formation. In Streptococcus gordonii, this protein is DNA-binding protein HU (hup).